A 201-amino-acid chain; its full sequence is MKLLHLDASILPEDSSVSRTLSAAVVAHVRALQPDLTVTRRDLVAHPLSHMTLANLPPDHPASVPGNEVERAESQAVLEEFLTADIVVIGAPMYNFTIPTQLKSWLDRVLVPGRTFKYGPEGVKGLVEGKRVIVALSRGSFYGQETPYATAEHTETYLRTALGFIGIATPEVIVAEGVSRGEDQRAAAIEAAHQTVAALRV.

Residues S9, 16–18 (SVS), and 93–96 (MYNF) contribute to the FMN site.

This sequence belongs to the azoreductase type 1 family. In terms of assembly, homodimer. FMN serves as cofactor.

It carries out the reaction 2 a quinone + NADH + H(+) = 2 a 1,4-benzosemiquinone + NAD(+). The catalysed reaction is N,N-dimethyl-1,4-phenylenediamine + anthranilate + 2 NAD(+) = 2-(4-dimethylaminophenyl)diazenylbenzoate + 2 NADH + 2 H(+). Quinone reductase that provides resistance to thiol-specific stress caused by electrophilic quinones. Its function is as follows. Also exhibits azoreductase activity. Catalyzes the reductive cleavage of the azo bond in aromatic azo compounds to the corresponding amines. The sequence is that of FMN-dependent NADH:quinone oxidoreductase from Gluconacetobacter diazotrophicus (strain ATCC 49037 / DSM 5601 / CCUG 37298 / CIP 103539 / LMG 7603 / PAl5).